The chain runs to 512 residues: UDP-N-acetylmuramate--L-alanine ligase (512 aa).

132–138 lines the ATP pocket; sequence GAHGKTT.

The protein belongs to the MurCDEF family.

It is found in the cytoplasm. The enzyme catalyses UDP-N-acetyl-alpha-D-muramate + L-alanine + ATP = UDP-N-acetyl-alpha-D-muramoyl-L-alanine + ADP + phosphate + H(+). Its pathway is cell wall biogenesis; peptidoglycan biosynthesis. In terms of biological role, cell wall formation. The chain is UDP-N-acetylmuramate--L-alanine ligase from Bifidobacterium longum subsp. infantis (strain ATCC 15697 / DSM 20088 / JCM 1222 / NCTC 11817 / S12).